Consider the following 89-residue polypeptide: Large ribosomal subunit protein bL27 (89 aa).

A disordered region spans residues 1–22 (MAHTKKGGSSRNGRDSESKRLG).

It belongs to the bacterial ribosomal protein bL27 family.

The sequence is that of Large ribosomal subunit protein bL27 from Brucella melitensis biotype 1 (strain ATCC 23456 / CCUG 17765 / NCTC 10094 / 16M).